Reading from the N-terminus, the 478-residue chain is Leukotoxin secretion protein D (478 aa).

Residues 1–59 (MKIWLSGIYEFFLRYKNTWAEVWKIRKELDHPNRKKDESEFLPAHLDLIETPVSKKPRL) lie on the Cytoplasmic side of the membrane. A helical membrane pass occupies residues 60–80 (IAYLIMLFLVVAIVLASVSKV). Residues 81 to 478 (EIVATAPGKL…ESVTESLRER (398 aa)) lie on the Periplasmic side of the membrane.

The protein belongs to the membrane fusion protein (MFP) (TC 8.A.1) family.

The protein resides in the cell inner membrane. In terms of biological role, involved in the transport of the Leukotoxin. The chain is Leukotoxin secretion protein D (lktD) from Mannheimia haemolytica (Pasteurella haemolytica).